Reading from the N-terminus, the 269-residue chain is Ribosomal RNA large subunit methyltransferase E (269 aa).

S-adenosyl-L-methionine is bound by residues Gly48, Trp50, Asp68, Asp86, and Asp111. The Proton acceptor role is filled by Lys151. The TRAM domain maps to 198 to 256 (PVAAGDRIEVTVEERGDEGDGIAYVEGYSIFVSDADVGETVTVEVVDAKPRFGFATRVD).

The protein belongs to the class I-like SAM-binding methyltransferase superfamily. RNA methyltransferase RlmE family.

Its subcellular location is the cytoplasm. The enzyme catalyses uridine(2552) in 23S rRNA + S-adenosyl-L-methionine = 2'-O-methyluridine(2552) in 23S rRNA + S-adenosyl-L-homocysteine + H(+). Functionally, specifically methylates the uridine in position 2552 of 23S rRNA at the 2'-O position of the ribose in the fully assembled 50S ribosomal subunit. This Halorubrum lacusprofundi (strain ATCC 49239 / DSM 5036 / JCM 8891 / ACAM 34) protein is Ribosomal RNA large subunit methyltransferase E.